The primary structure comprises 437 residues: UPF0597 protein Shal_0864 (437 aa).

This sequence belongs to the UPF0597 family.

This chain is UPF0597 protein Shal_0864, found in Shewanella halifaxensis (strain HAW-EB4).